Consider the following 607-residue polypeptide: Probable LRR receptor-like serine/threonine-protein kinase At5g65240 (607 aa).

The signal sequence occupies residues 1-24 (MALLIITALVFSSLWSSVSPDAQG). Over 25–219 (DALFALRSSL…SGDSSSRKTG (195 aa)) the chain is Extracellular. 2 N-linked (GlcNAc...) asparagine glycosylation sites follow: asparagine 74 and asparagine 110. LRR repeat units follow at residues 87-111 (LTTL…IGNL), 112-135 (SSLT…LGNL), 137-159 (NLQF…LTGL), and 160-183 (SKLI…LFKI). 4 N-linked (GlcNAc...) asparagine glycosylation sites follow: asparagine 149, asparagine 171, asparagine 187, and asparagine 192. A helical transmembrane segment spans residues 220 to 240 (IIAGVVSGIAVILLGFFFFFF). Residues 241-607 (CKDKHKGYKR…QDAIELSGGR (367 aa)) are Cytoplasmic-facing. Threonine 281 bears the Phosphothreonine mark. The Protein kinase domain occupies 284-568 (FSEKNVLGQG…EGEGLAERWE (285 aa)). 290–298 (LGQGGFGKV) is a binding site for ATP. Threonine 307 bears the Phosphothreonine mark. Lysine 312 serves as a coordination point for ATP. Serine 365 is modified (phosphoserine). Aspartate 411 acts as the Proton acceptor in catalysis. Residues threonine 444, threonine 445, and threonine 450 each carry the phosphothreonine modification. Serine 460 carries the phosphoserine modification. Threonine 461 carries the post-translational modification Phosphothreonine. The residue at position 465 (serine 465) is a Phosphoserine. Threonine 541 carries the phosphothreonine modification.

The protein belongs to the protein kinase superfamily. Ser/Thr protein kinase family.

The protein resides in the cell membrane. It catalyses the reaction L-seryl-[protein] + ATP = O-phospho-L-seryl-[protein] + ADP + H(+). The catalysed reaction is L-threonyl-[protein] + ATP = O-phospho-L-threonyl-[protein] + ADP + H(+). The sequence is that of Probable LRR receptor-like serine/threonine-protein kinase At5g65240 from Arabidopsis thaliana (Mouse-ear cress).